Here is a 551-residue protein sequence, read N- to C-terminus: Arginine--tRNA ligase (551 aa).

The short motif at 123–133 (ANPTGPLTIGR) is the 'HIGH' region element.

It belongs to the class-I aminoacyl-tRNA synthetase family. In terms of assembly, monomer.

It is found in the cytoplasm. The catalysed reaction is tRNA(Arg) + L-arginine + ATP = L-arginyl-tRNA(Arg) + AMP + diphosphate. The chain is Arginine--tRNA ligase from Prosthecochloris aestuarii (strain DSM 271 / SK 413).